Here is a 183-residue protein sequence, read N- to C-terminus: NAD(P)H-quinone oxidoreductase subunit I, chloroplastic (183 aa).

2 4Fe-4S ferredoxin-type domains span residues 55–84 and 95–124; these read GRIH…VDWE and KNYS…MTEE. Residues Cys-64, Cys-67, Cys-70, Cys-74, Cys-104, Cys-107, Cys-110, and Cys-114 each coordinate [4Fe-4S] cluster.

The protein belongs to the complex I 23 kDa subunit family. In terms of assembly, NDH is composed of at least 16 different subunits, 5 of which are encoded in the nucleus. [4Fe-4S] cluster is required as a cofactor.

Its subcellular location is the plastid. The protein resides in the chloroplast thylakoid membrane. The catalysed reaction is a plastoquinone + NADH + (n+1) H(+)(in) = a plastoquinol + NAD(+) + n H(+)(out). It carries out the reaction a plastoquinone + NADPH + (n+1) H(+)(in) = a plastoquinol + NADP(+) + n H(+)(out). Functionally, NDH shuttles electrons from NAD(P)H:plastoquinone, via FMN and iron-sulfur (Fe-S) centers, to quinones in the photosynthetic chain and possibly in a chloroplast respiratory chain. The immediate electron acceptor for the enzyme in this species is believed to be plastoquinone. Couples the redox reaction to proton translocation, and thus conserves the redox energy in a proton gradient. This chain is NAD(P)H-quinone oxidoreductase subunit I, chloroplastic, found in Marchantia polymorpha (Common liverwort).